Here is a 123-residue protein sequence, read N- to C-terminus: Large ribosomal subunit protein bL20 (123 aa).

It belongs to the bacterial ribosomal protein bL20 family.

Functionally, binds directly to 23S ribosomal RNA and is necessary for the in vitro assembly process of the 50S ribosomal subunit. It is not involved in the protein synthesizing functions of that subunit. This chain is Large ribosomal subunit protein bL20 (rplT), found in Chlamydia trachomatis serovar D (strain ATCC VR-885 / DSM 19411 / UW-3/Cx).